Here is a 186-residue protein sequence, read N- to C-terminus: Alkyl hydroperoxide reductase AhpD (186 aa).

C131 functions as the Proton donor in the catalytic mechanism. C131 and C134 are disulfide-bonded. Catalysis depends on C134, which acts as the Cysteine sulfenic acid (-SOH) intermediate.

The protein belongs to the AhpD family.

It carries out the reaction N(6)-[(R)-dihydrolipoyl]-L-lysyl-[lipoyl-carrier protein] + a hydroperoxide = N(6)-[(R)-lipoyl]-L-lysyl-[lipoyl-carrier protein] + an alcohol + H2O. Functionally, antioxidant protein with alkyl hydroperoxidase activity. Required for the reduction of the AhpC active site cysteine residues and for the regeneration of the AhpC enzyme activity. This is Alkyl hydroperoxide reductase AhpD from Rhodospirillum centenum (strain ATCC 51521 / SW).